The sequence spans 118 residues: Small ribosomal subunit protein uS13 (118 aa).

The tract at residues 91–118 (HRRGLPVRGQRTKTNARTRKGPRKPIKK) is disordered.

The protein belongs to the universal ribosomal protein uS13 family. In terms of assembly, part of the 30S ribosomal subunit. Forms a loose heterodimer with protein S19. Forms two bridges to the 50S subunit in the 70S ribosome.

Located at the top of the head of the 30S subunit, it contacts several helices of the 16S rRNA. In the 70S ribosome it contacts the 23S rRNA (bridge B1a) and protein L5 of the 50S subunit (bridge B1b), connecting the 2 subunits; these bridges are implicated in subunit movement. Contacts the tRNAs in the A and P-sites. In Hamiltonella defensa subsp. Acyrthosiphon pisum (strain 5AT), this protein is Small ribosomal subunit protein uS13.